Consider the following 635-residue polypeptide: ADP-ribosylation factor-binding protein GGA1 (635 aa).

Met1 bears the N-acetylmethionine mark. One can recognise a VHS domain in the interval 17-147 (ATNPLNKELN…MLKKQGIVKS (131 aa)). The segment at 114 to 273 (KILELLYSWT…RLASDTEDND (160 aa)) is interaction with ARF3. The GAT domain maps to 171-298 (DEEKSKMLAR…VINLYKQLVR (128 aa)). Ser185 carries the phosphoserine modification. The segment at 299–505 (GEEVNGDATA…ITVPLESIKP (207 aa)) is unstructured hinge. The interval 305 to 349 (DATASSIPGSTSALLDLSGLDLPPPGTTQPATPTRPGNQSSPEQL) is disordered. Positions 313–325 (GSTSALLDLSGLD) are enriched in low complexity. Ser354 is modified (phosphoserine). The short motif at 357-361 (DDELM) is the Autoinhibitory element. Disordered stretches follow at residues 362–422 (SLGL…LDDL) and 455–490 (RDLQ…TPTE). Residues 383–393 (NFQSSDGTESS) show a composition bias toward polar residues. Ser417 bears the Phosphoserine mark. A compositionally biased stretch (low complexity) spans 459 to 476 (SKSSSPSPGAASLLHTTS). Residues 477 to 486 (PEPPGPPPQA) show a composition bias toward pro residues. Residues 506–627 (SSILPVTVYD…NEMGDVDQFP (122 aa)) enclose the GAE domain.

This sequence belongs to the GGA protein family. As to quaternary structure, monomer. Interacts with GGA2 and GGA3. Binds to clathrin and activated ARFs, including ARF1, ARF5 and ARF6. Interacts with RABEP1 and RABGEF1. Interacts with the type-I membrane proteins LRP3, M6PR/CD-MPR and IGF2R/CI-MPR. Interacts (via N-terminal VHS domain) with SORL1/sorLA and SORT1 (via C-terminal cytosolic domain). Interacts with EPN4. Interacts with CCDC91. Interacts with HEATR5B/p200a. Interacts with SYNRG/gamma-synergin. Interacts (via GAE doamin) with NECAP1 and NECAP2. Interacts (via GAE domain) with AFTPH/aftiphilin. Interacts with TSG101 and UBC. Interacts with RNF11. Interacts (via VHS domain) with BACE1 (via DXXLL motif); the interaction highly increases when BACE1 is phosphorylated at 'Ser-498'. Interacts with CNST. Interacts with ADRA2B. Interacts with ARL3; the interaction recruits, in collaboration with RABEP1, PKD1:PKD2 complex to trans-Golgi network and is required for ciliary targeting. Post-translationally, phosphorylated by CK2 and dephosphorylated by PP2A. Phosphorylation of GGA1 allows the internal DXXLL motif to bind the VHS domain and to inhibit the recognition of cargo signals. Ubiquitinated.

The protein resides in the golgi apparatus. Its subcellular location is the trans-Golgi network membrane. It localises to the endosome membrane. It is found in the early endosome membrane. Plays a role in protein sorting and trafficking between the trans-Golgi network (TGN) and endosomes. Mediates the ARF-dependent recruitment of clathrin to the TGN and binds ubiquitinated proteins and membrane cargo molecules with a cytosolic acidic cluster-dileucine (DXXLL) motif. Mediates export of the GPCR receptor ADRA2B to the cell surface. Required for targeting PKD1:PKD2 complex from the trans-Golgi network to the cilium membrane. Regulates retrograde transport of proteins such as phosphorylated form of BACE1 from endosomes to the trans-Golgi network. This chain is ADP-ribosylation factor-binding protein GGA1 (Gga1), found in Mus musculus (Mouse).